A 487-amino-acid polypeptide reads, in one-letter code: Betaine aldehyde dehydrogenase (487 aa).

K(+)-binding residues include Ile-27 and Asp-93. Gly-149–Trp-151 contributes to the NAD(+) binding site. Lys-161 serves as the catalytic Charge relay system. NAD(+) contacts are provided by residues Lys-175–Glu-178 and Ser-228–Thr-231. Leu-243 serves as a coordination point for K(+). Catalysis depends on Glu-249, which acts as the Proton acceptor. Residues Gly-251, Cys-283, and Glu-384 each coordinate NAD(+). Catalysis depends on Cys-283, which acts as the Nucleophile. At Cys-283 the chain carries Cysteine sulfenic acid (-SOH). Residues Lys-454 and Gly-457 each coordinate K(+). Glu-461 functions as the Charge relay system in the catalytic mechanism.

The protein belongs to the aldehyde dehydrogenase family. As to quaternary structure, dimer of dimers. K(+) serves as cofactor.

It carries out the reaction betaine aldehyde + NAD(+) + H2O = glycine betaine + NADH + 2 H(+). The protein operates within amine and polyamine biosynthesis; betaine biosynthesis via choline pathway; betaine from betaine aldehyde: step 1/1. Its function is as follows. Involved in the biosynthesis of the osmoprotectant glycine betaine. Catalyzes the irreversible oxidation of betaine aldehyde to the corresponding acid. The chain is Betaine aldehyde dehydrogenase from Brucella canis (strain ATCC 23365 / NCTC 10854 / RM-666).